Reading from the N-terminus, the 55-residue chain is Large ribosomal subunit protein bL33 (55 aa).

This sequence belongs to the bacterial ribosomal protein bL33 family.

The sequence is that of Large ribosomal subunit protein bL33 from Methylorubrum extorquens (strain CM4 / NCIMB 13688) (Methylobacterium extorquens).